The primary structure comprises 268 residues: L-aspartate dehydrogenase (268 aa).

NAD(+) contacts are provided by Ala125 and Asn191. His221 is an active-site residue.

The protein belongs to the L-aspartate dehydrogenase family.

It catalyses the reaction L-aspartate + NADP(+) + H2O = oxaloacetate + NH4(+) + NADPH + H(+). It carries out the reaction L-aspartate + NAD(+) + H2O = oxaloacetate + NH4(+) + NADH + H(+). It participates in cofactor biosynthesis; NAD(+) biosynthesis; iminoaspartate from L-aspartate (dehydrogenase route): step 1/1. Functionally, specifically catalyzes the NAD or NADP-dependent dehydrogenation of L-aspartate to iminoaspartate. The polypeptide is L-aspartate dehydrogenase (Ralstonia nicotianae (strain ATCC BAA-1114 / GMI1000) (Ralstonia solanacearum)).